Consider the following 387-residue polypeptide: Succinate--CoA ligase [ADP-forming] subunit beta (387 aa).

The 228-residue stretch at 9-236 folds into the ATP-grasp domain; sequence KELFAKHNVP…RAATDPLELK (228 aa). Residues lysine 45, 52 to 54, serine 94, and glutamate 99 each bind ATP; that span reads GRG. Asparagine 191 and aspartate 205 together coordinate Mg(2+). Residues asparagine 256 and 318–320 each bind substrate; that span reads GIT.

The protein belongs to the succinate/malate CoA ligase beta subunit family. Heterotetramer of two alpha and two beta subunits. The cofactor is Mg(2+).

It catalyses the reaction succinate + ATP + CoA = succinyl-CoA + ADP + phosphate. The enzyme catalyses GTP + succinate + CoA = succinyl-CoA + GDP + phosphate. The protein operates within carbohydrate metabolism; tricarboxylic acid cycle; succinate from succinyl-CoA (ligase route): step 1/1. Functionally, succinyl-CoA synthetase functions in the citric acid cycle (TCA), coupling the hydrolysis of succinyl-CoA to the synthesis of either ATP or GTP and thus represents the only step of substrate-level phosphorylation in the TCA. The beta subunit provides nucleotide specificity of the enzyme and binds the substrate succinate, while the binding sites for coenzyme A and phosphate are found in the alpha subunit. This is Succinate--CoA ligase [ADP-forming] subunit beta from Mycobacterium bovis (strain ATCC BAA-935 / AF2122/97).